Reading from the N-terminus, the 190-residue chain is Glutathione peroxidase 2 (190 aa).

Sec-40 is an active-site residue. Position 40 (Sec-40) is a non-standard amino acid, selenocysteine.

Belongs to the glutathione peroxidase family. Homotetramer.

The protein localises to the cytoplasm. The protein resides in the cytosol. It carries out the reaction 2 glutathione + H2O2 = glutathione disulfide + 2 H2O. It catalyses the reaction a hydroperoxy polyunsaturated fatty acid + 2 glutathione = a hydroxy polyunsaturated fatty acid + glutathione disulfide + H2O. The catalysed reaction is tert-butyl hydroperoxide + 2 glutathione = tert-butanol + glutathione disulfide + H2O. The enzyme catalyses cumene hydroperoxide + 2 glutathione = 2-phenylpropan-2-ol + glutathione disulfide + H2O. It carries out the reaction (13S)-hydroperoxy-(9Z,11E)-octadecadienoate + 2 glutathione = (13S)-hydroxy-(9Z,11E)-octadecadienoate + glutathione disulfide + H2O. It catalyses the reaction (5S)-hydroperoxy-(6E,8Z,11Z,14Z)-eicosatetraenoate + 2 glutathione = (5S)-hydroxy-(6E,8Z,11Z,14Z)-eicosatetraenoate + glutathione disulfide + H2O. The catalysed reaction is (12R)-hydroperoxy-(5Z,8Z,10E,14Z)-eicosatetraenoate + 2 glutathione = (12R)-hydroxy-(5Z,8Z,10E,14Z)-eicosatetraenoate + glutathione disulfide + H2O. The enzyme catalyses (15S)-hydroperoxy-(5Z,8Z,11Z,13E)-eicosatetraenoate + 2 glutathione = (15S)-hydroxy-(5Z,8Z,11Z,13E)-eicosatetraenoate + glutathione disulfide + H2O. In terms of biological role, catalyzes the reduction of hydroperoxides in a glutathione-dependent manner thus regulating cellular redox homeostasis. Can reduce small soluble hydroperoxides such as H2O2, cumene hydroperoxide and tert-butyl hydroperoxide, as well as several fatty acid-derived hydroperoxides. Cannot reduce phosphatidycholine hydroperoxide. This is Glutathione peroxidase 2 (GPX2) from Sapajus apella (Brown-capped capuchin).